Here is a 249-residue protein sequence, read N- to C-terminus: BPI fold-containing family A member 2 (249 aa).

The first 18 residues, 1–18, serve as a signal peptide directing secretion; it reads MLQLWKLVLLCGVLTGTS. N-linked (GlcNAc...) asparagine glycans are attached at residues asparagine 124 and asparagine 132. Cysteine 174 and cysteine 217 are joined by a disulfide.

It belongs to the BPI/LBP/Plunc superfamily. Plunc family. As to expression, detected in submandibular gland. Secreted into saliva.

It is found in the secreted. Has strong antibacterial activity against P.aeruginosa. This Homo sapiens (Human) protein is BPI fold-containing family A member 2 (BPIFA2).